The sequence spans 479 residues: Ribosomal RNA small subunit methyltransferase F (479 aa).

S-adenosyl-L-methionine contacts are provided by residues 125–131 (AAAPGSK), glutamate 149, aspartate 176, and aspartate 194. The Nucleophile role is filled by cysteine 247.

It belongs to the class I-like SAM-binding methyltransferase superfamily. RsmB/NOP family.

Its subcellular location is the cytoplasm. It carries out the reaction cytidine(1407) in 16S rRNA + S-adenosyl-L-methionine = 5-methylcytidine(1407) in 16S rRNA + S-adenosyl-L-homocysteine + H(+). Specifically methylates the cytosine at position 1407 (m5C1407) of 16S rRNA. This chain is Ribosomal RNA small subunit methyltransferase F, found in Salmonella paratyphi B (strain ATCC BAA-1250 / SPB7).